We begin with the raw amino-acid sequence, 400 residues long: uncharacterized protein (400 aa).

The N-terminal stretch at 1–31 is a signal peptide; sequence MENPIKPVATRSIGIAVVLLVVGIVIGFAVG.

The protein belongs to the bacterial solute-binding protein 1 family. WtpA subfamily.

This is an uncharacterized protein from Thermoplasma acidophilum (strain ATCC 25905 / DSM 1728 / JCM 9062 / NBRC 15155 / AMRC-C165).